A 552-amino-acid chain; its full sequence is Putative transport protein PBPRA2144 (552 aa).

5 helical membrane-spanning segments follow: residues 4–24, 26–46, 65–85, 95–115, and 158–178; these read IALS…IGNW, ICGV…VGHF, FGLI…FFAS, AFAA…YKIF, and MGYA…MWIL. 2 RCK C-terminal domains span residues 188–276 and 279–361; these read KEAE…VIGE and DASL…IVGN. A run of 6 helical transmembrane segments spans residues 371–391, 394–414, 439–459, 464–484, 493–513, and 532–552; these read MLPV…PFYL, FPAA…LILA, IVLF…DTLV, LSWM…VGFL, YLTI…LAFA, and PLVM…LWAV.

It belongs to the AAE transporter (TC 2.A.81) family. YidE subfamily.

The protein localises to the cell membrane. The protein is Putative transport protein PBPRA2144 of Photobacterium profundum (strain SS9).